Here is a 421-residue protein sequence, read N- to C-terminus: DUF724 domain-containing protein 8 (421 aa).

Composition is skewed to polar residues over residues 149–165 (TQGSGDKTGDSVRNANE) and 199–213 (PRNQNGSGNDSTLEN). The interval 149–229 (TQGSGDKTGD…NRKRKREENL (81 aa)) is disordered. The region spanning 246 to 420 (VLPFEKKLRI…LEFLATASAP (175 aa)) is the DUF724 domain. The stretch at 361–397 (EKVTAEKESVKAENKRKILELQRLNEEMDKEIAQSKS) forms a coiled coil.

As to expression, expressed in leaves and flowers, and at lower levels in roots, stems and siliques.

It is found in the nucleus. Functionally, may be involved in the polar growth of plant cells via transportation of RNAs. The protein is DUF724 domain-containing protein 8 of Arabidopsis thaliana (Mouse-ear cress).